Consider the following 184-residue polypeptide: NADH-quinone oxidoreductase subunit B (184 aa).

Residues cysteine 37, cysteine 38, cysteine 103, and cysteine 132 each coordinate [4Fe-4S] cluster.

Belongs to the complex I 20 kDa subunit family. NDH-1 is composed of 14 different subunits. Subunits NuoB, C, D, E, F, and G constitute the peripheral sector of the complex. The cofactor is [4Fe-4S] cluster.

It localises to the cell membrane. The catalysed reaction is a quinone + NADH + 5 H(+)(in) = a quinol + NAD(+) + 4 H(+)(out). Functionally, NDH-1 shuttles electrons from NADH, via FMN and iron-sulfur (Fe-S) centers, to quinones in the respiratory chain. The immediate electron acceptor for the enzyme in this species is believed to be a menaquinone. Couples the redox reaction to proton translocation (for every two electrons transferred, four hydrogen ions are translocated across the cytoplasmic membrane), and thus conserves the redox energy in a proton gradient. The protein is NADH-quinone oxidoreductase subunit B of Mycobacterium marinum (strain ATCC BAA-535 / M).